The chain runs to 591 residues: Protein kinase C zeta type (591 aa).

Positions 15–98 constitute a PB1 domain; it reads RVRLKAHYSG…DGLILHVFPS (84 aa). Positions 79–145 are interaction with SQSTM1; sequence AFRLAGQHRD…KRFNRRAYCG (67 aa). A Phorbol-ester/DAG-type zinc finger spans residues 130 to 180; it reads GHLFQAKRFNRRAYCGQCSERIWGLARQGYRCINCKLLVHKRCHGLVPLTC. The Protein kinase domain occupies 251-517; that stretch reads FDLIRVIGRG…FSDIKSHAFF (267 aa). Residues 257–265 and Lys280 contribute to the ATP site; that span reads IGRGSYAKV. Asp375 acts as the Proton acceptor in catalysis. Position 409 is a phosphothreonine; by PDPK1 and PI3K (Thr409). In terms of domain architecture, AGC-kinase C-terminal spans 518-589; it reads RSIDWDLLEK…INPLLLSTEE (72 aa). A Phosphothreonine modification is found at Thr559. Residue Ser590 is modified to Phosphoserine.

The protein belongs to the protein kinase superfamily. AGC Ser/Thr protein kinase family. PKC subfamily. In terms of assembly, interacts with PARD6A, PARD6B and PARD6G. Part of a complex with PARD3, PARD6A or PARD6B or PARD6G and CDC42 or RAC1. Interacts with ADAP1/CENTA1. Interacts directly with SQSTM1. Forms a ternary complex with SQSTM1 and KCNAB2. Forms another ternary complex with SQSTM1 and GABRR3. Forms a complex with SQSTM1 and MAP2K5. Interacts (via the protein kinase domain) with WWC1. Forms a tripartite complex with WWC1 and DDR1, but predominantly in the absence of collagen. Component of the Par polarity complex, composed of at least phosphorylated PRKCZ, PARD3 and TIAM1. Interacts with PDPK1 (via N-terminal region). Interacts with WDFY2 (via WD repeats 1-3). Interacts with VAMP2. Forms a complex with WDFY2 and VAMP2. Interacts with APPL1. Interacts with WWC1, WWC2 and WWC3. In terms of processing, CDH5 is required for its phosphorylation at Thr-409. Phosphorylated by protein kinase PDPK1; phosphorylation is inhibited by the apoptotic C-terminal cleavage product of PKN2. Phosphorylation at Thr-409 by PI3K activates the kinase.

Its subcellular location is the cytoplasm. The protein localises to the endosome. It is found in the cell junction. The protein resides in the membrane. It carries out the reaction L-seryl-[protein] + ATP = O-phospho-L-seryl-[protein] + ADP + H(+). The catalysed reaction is L-threonyl-[protein] + ATP = O-phospho-L-threonyl-[protein] + ADP + H(+). With respect to regulation, atypical PKCs (PRKCI and PRKCZ) exhibit an elevated basal enzymatic activity (that may be due to the interaction with SMG1 or SQSTM1) and are not regulated by diacylglycerol, phosphatidylserine, phorbol esters or calcium ions. Two specific sites, Thr-409 (activation loop of the kinase domain) and Thr-559 (turn motif), need to be phosphorylated for its full activation. Phosphatidylinositol 3,4,5-trisphosphate might be a physiological activator. Its function is as follows. Calcium- and diacylglycerol-independent serine/threonine-protein kinase that functions in phosphatidylinositol 3-kinase (PI3K) pathway and mitogen-activated protein (MAP) kinase cascade, and is involved in NF-kappa-B activation, mitogenic signaling, cell proliferation, cell polarity, inflammatory response and maintenance of long-term potentiation (LTP). Upon lipopolysaccharide (LPS) treatment in macrophages, or following mitogenic stimuli, functions downstream of PI3K to activate MAP2K1/MEK1-MAPK1/ERK2 signaling cascade independently of RAF1 activation. Required for insulin-dependent activation of AKT3, but may function as an adapter rather than a direct activator. Upon insulin treatment may act as a downstream effector of PI3K and contribute to the activation of translocation of the glucose transporter SLC2A4/GLUT4 and subsequent glucose transport in adipocytes. In EGF-induced cells, binds and activates MAP2K5/MEK5-MAPK7/ERK5 independently of its kinase activity and can activate JUN promoter through MEF2C. Through binding with SQSTM1/p62, functions in interleukin-1 signaling and activation of NF-kappa-B with the specific adapters RIPK1 and TRAF6. Participates in TNF-dependent transactivation of NF-kappa-B by phosphorylating and activating IKBKB kinase, which in turn leads to the degradation of NF-kappa-B inhibitors. In migrating astrocytes, forms a cytoplasmic complex with PARD6A and is recruited by CDC42 to function in the establishment of cell polarity along with the microtubule motor and dynein. In association with FEZ1, stimulates neuronal differentiation in PC12 cells. In the inflammatory response, is required for the T-helper 2 (Th2) differentiation process, including interleukin production, efficient activation of JAK1 and the subsequent phosphorylation and nuclear translocation of STAT6. May be involved in development of allergic airway inflammation (asthma), a process dependent on Th2 immune response. In the NF-kappa-B-mediated inflammatory response, can relieve SETD6-dependent repression of NF-kappa-B target genes by phosphorylating the RELA subunit at 'Ser-311'. Phosphorylates VAMP2 in vitro. Phosphorylates and activates LRRK1, which phosphorylates RAB proteins involved in intracellular trafficking. The polypeptide is Protein kinase C zeta type (PRKCZ) (Oryctolagus cuniculus (Rabbit)).